We begin with the raw amino-acid sequence, 351 residues long: Peptide chain release factor 1 (351 aa).

Gln229 bears the N5-methylglutamine mark. A disordered region spans residues 278–297 (RVDDERSADRAAQVGSGDRS).

It belongs to the prokaryotic/mitochondrial release factor family. Methylated by PrmC. Methylation increases the termination efficiency of RF1.

Its subcellular location is the cytoplasm. Functionally, peptide chain release factor 1 directs the termination of translation in response to the peptide chain termination codons UAG and UAA. The protein is Peptide chain release factor 1 of Roseobacter denitrificans (strain ATCC 33942 / OCh 114) (Erythrobacter sp. (strain OCh 114)).